The primary structure comprises 244 residues: Probable septum site-determining protein MinC (244 aa).

It belongs to the MinC family. In terms of assembly, interacts with MinD and FtsZ.

Cell division inhibitor that blocks the formation of polar Z ring septums. Rapidly oscillates between the poles of the cell to destabilize FtsZ filaments that have formed before they mature into polar Z rings. Prevents FtsZ polymerization. The chain is Probable septum site-determining protein MinC from Dichelobacter nodosus (strain VCS1703A).